The chain runs to 73 residues: Putative antitoxin VapB16 (73 aa).

It belongs to the UPF0330 family.

Functionally, possibly the antitoxin component of a type II toxin-antitoxin (TA) system. Its cognate toxin is VapC16 (Potential). In Archaeoglobus fulgidus (strain ATCC 49558 / DSM 4304 / JCM 9628 / NBRC 100126 / VC-16), this protein is Putative antitoxin VapB16 (vapB16).